The primary structure comprises 131 residues: Lysosomal enzyme trafficking factor (131 aa).

The next 2 membrane-spanning stretches (helical) occupy residues 8 to 28 and 66 to 86; these read MGWIGVSLYLFVSAAAFYYVF and LPFWLWAALFLIPYFQVFLFL.

Belongs to the LYSET family.

It localises to the golgi apparatus membrane. Functionally, required for mannose-6-phosphate-dependent trafficking of lysosomal enzymes. LYSET bridges GlcNAc-1-phosphate transferase (GNPTAB), to the membrane-bound transcription factor site-1 protease (MBTPS1), thus allowing proteolytic activation of the GNPTAB. GNPTAB is involved in the regulation of M6P-dependent Golgi-to-lysosome trafficking of lysosomal enzymes. LYSET is thus an essential factor for maturation and delivery of lysosomal hydrolases. The chain is Lysosomal enzyme trafficking factor (lyset-b) from Xenopus laevis (African clawed frog).